Here is a 340-residue protein sequence, read N- to C-terminus: MTTVTPSAGRELSNPPSDGISNLRFSNNSDHLLVSSWDKRVRLYDVSTNSLKGEFLHGGAVLDCCFHDDFSGFSVGADYKVRRIVFNVGKEDILGTHDKAVRCVEYSYAAGQVITGSWDKTVKCWDPRGASGPERTQVGTYLQPERVYSMSLVGHRLVVATAGRHVNIYDLRNMSQPEQRRESSLKYQTRCVRCYPNGTGYALSSVEGRVAMEFFDLSEAAQAKKYAFKCHRKSEAGRDIVYPVNSIAFHPIYGTFATGGCDGFVNIWDGNNKKRLYQYSKYPTSISALSFSRDGQLLAVASSYTFEEGEKSQEPEAIFVRSVNEIEVKPKPKVYPNPAA.

Positions 1 to 20 (MTTVTPSAGRELSNPPSDGI) are disordered. WD repeat units lie at residues 15–54 (PPSD…LKGE), 96–135 (THDK…GPER), 142–179 (LQPE…QPEQ), 239–278 (DIVY…RLYQ), and 281–324 (KYPT…RSVN).

It belongs to the WD repeat BUB3 family. In terms of assembly, part of the mitotic checkpoint complex (MCC); interacts with CDC20-1 and CDC20-2. Interacts with MAD2 and BUBR1. In terms of tissue distribution, expressed in actively dividing tissues, early in organ development, in young leaves, lateral root primordia and root meristems, flower buds, flowers and siliques.

The protein resides in the nucleus. The protein localises to the chromosome. It is found in the centromere. It localises to the kinetochore. Its subcellular location is the cytoplasm. The protein resides in the cytoskeleton. The protein localises to the phragmoplast. It is found in the spindle. Its function is as follows. Has a dual function in spindle-assembly checkpoint signaling and in promoting the establishment of correct kinetochore-microtubule (K-MT) attachments. Promotes the formation of stable end-on bipolar attachments. Necessary for kinetochore localization of BUB1. The BUB1/BUB3 complex plays a role in the inhibition of anaphase-promoting complex or cyclosome (APC/C) when spindle-assembly checkpoint is activated and inhibits the ubiquitin ligase activity of APC/C by phosphorylating its activator CDC20. Essential for gametophyte development. This Arabidopsis thaliana (Mouse-ear cress) protein is Mitotic checkpoint protein BUB3.1 (BUB3.1).